Here is a 467-residue protein sequence, read N- to C-terminus: Mothers against decapentaplegic homolog 2 (467 aa).

Position 2 is an N-acetylserine (serine 2). Threonine 8 is subject to Phosphothreonine. The region spanning 10 to 176 (PVVKRLLGWK…YQRVETPVLP (167 aa)) is the MH1 domain. The residue at position 19 (lysine 19) is an N6-acetyllysine. Residues cysteine 74, cysteine 149, cysteine 161, and histidine 166 each contribute to the Zn(2+) site. The segment covering 207–217 (PAGIEPQSNYI) has biased composition (polar residues). The tract at residues 207–251 (PAGIEPQSNYIPETPPPGYISEDGETSDQQLNQSMDTGSPAELSP) is disordered. Threonine 220 carries the post-translational modification Phosphothreonine. Residues 221–225 (PPPGY) carry the PY-motif motif. Residues 233 to 243 (SDQQLNQSMDT) are compositionally biased toward polar residues. Serine 240 is subject to Phosphoserine; by CAMK2. Residues serine 245, serine 250, serine 255, serine 458, serine 460, and serine 464 each carry the phosphoserine modification. Positions 274 to 467 (WCSIAYYELN…SPSVRCSSMS (194 aa)) constitute an MH2 domain. Phosphoserine; by TGFBR1 occurs at positions 465 and 467.

The protein belongs to the dwarfin/SMAD family. In terms of assembly, monomer; in the absence of TGF-beta. Heterodimer; in the presence of TGF-beta. Forms a heterodimer with co-SMAD, SMAD4, in the nucleus to form the transactivation complex SMAD2/SMAD4. Found in a complex with SMAD3 and TRIM33 upon addition of TGF-beta. Identified in a complex that contains at least ZNF451, SMAD2, SMAD3 and SMAD4. Interacts (via the MH2 domain) with ZFYVE9; may form trimers with the SMAD4 co-SMAD. Interacts with TAZ/WWRT1. Interacts with FOXH1. Interacts with SNW1. Interacts with CREB-binding protein (CBP) and EP300. Interacts with SNON. Interacts with ALK4/ACVR1B. Interacts with SKOR1. Interacts with SKOR2. Interacts with PRDM16. Interacts (via MH2 domain) with LEMD3. Interacts with RBPMS. Interacts with WWP1. Interacts (dephosphorylated form, via the MH1 and MH2 domains) with RANBP3 (via its C-terminal R domain); the interaction results in the export of dephosphorylated SMAD3 out of the nucleus and termination of the TGF-beta signaling. Interacts with PDPK1 (via PH domain). Interacts with DAB2; the interactions are enhanced upon TGF-beta stimulation. Interacts with USP15. Interacts with PPP5C. Interacts with LDLRAD4 (via the SMAD interaction motif). Interacts (via MH2 domain) with PMEPA1 (via the SMAD interaction motif). Interacts with ZFHX3. Interacts with ZNF451. Interacts with SMURF2 when phosphorylated on Ser-465/467. Interacts with PPM1A. Interacts with TGF-beta. Interacts with TGFBR1. Interacts with TGIF. Interacts with SMAD3 and TRIM33. Interacts with ZNF580. Interacts with NEDD4L in response to TGF-beta. Interacts with HGS. Interacts with AIP1. Interacts with WWP1. Interacts with PML. Interacts weakly with ZNF8. Interacts (when phosphorylated) with RNF111; RNF111 acts as an enhancer of the transcriptional responses by mediating ubiquitination and degradation of SMAD2 inhibitors. Interacts with YAP1 (when phosphorylated at 'Ser-112'). Interacts when phosphorylated with IPO7; the interaction facilitates translocation of SMAD2 to the nucleus. Interacts with MTMR4; negatively regulates TGF-beta signaling through SMAD2 dephosphorylation and retention in endosomes. In terms of processing, in response to TGF-beta, phosphorylated on the C-terminal SXS motif by TGF-beta and activin type 1 receptor kinases, phosphorylation declines progressively in a KMT5A-dependent manner. Phosphorylation in this motif is required for interaction with a number of proteins including SMURF2, SNON and SMAD4 in response to TGF-beta. Dephosphorylated in this motif by PPM1A leading to disruption of the SMAD2/3-SMAD4 complex, nuclear export and termination of the TGF-beta signaling. In response to decorin, the naturally occurring inhibitor of TGF-beta signaling, phosphorylated on Ser-240 by CaMK2. Phosphorylated by MAPK3 upon EGF stimulation; which increases transcriptional activity and stability, and is blocked by calmodulin. Phosphorylated by PDPK1. In response to TGF-beta, ubiquitinated by NEDD4L; which promotes its degradation. Monoubiquitinated, leading to prevent DNA-binding. Deubiquitination by USP15 alleviates inhibition and promotes activation of TGF-beta target genes. Ubiquitinated by RNF111, leading to its degradation: only SMAD2 proteins that are 'in use' are targeted by RNF111, RNF111 playing a key role in activating SMAD2 and regulating its turnover. Post-translationally, acetylated on Lys-19 by coactivators in response to TGF-beta signaling, which increases transcriptional activity.

The protein resides in the cytoplasm. It is found in the nucleus. Its function is as follows. Receptor-regulated SMAD (R-SMAD) that is an intracellular signal transducer and transcriptional modulator activated by TGF-beta (transforming growth factor) and activin type 1 receptor kinases. Binds the TRE element in the promoter region of many genes that are regulated by TGF-beta and, on formation of the SMAD2/SMAD4 complex, activates transcription. Promotes TGFB1-mediated transcription of odontoblastic differentiation genes in dental papilla cells. Positively regulates PDPK1 kinase activity by stimulating its dissociation from the 14-3-3 protein YWHAQ which acts as a negative regulator. The polypeptide is Mothers against decapentaplegic homolog 2 (Smad2) (Mus musculus (Mouse)).